A 327-amino-acid chain; its full sequence is S-adenosylmethionine/S-adenosylhomocysteine transporter (327 aa).

The next 10 membrane-spanning stretches (helical) occupy residues 22–42, 53–73, 85–105, 114–134, 143–163, 165–185, 202–222, 240–260, 271–291, and 294–314; these read CDMAIFLIFLNAFIWSSSFAL, LFVTGSRMVLAGVVLFGLLLC, IMPIVLLSVIGFYLTNVLEFI, TACFIYGFSPFTAAFCSYVQL, LGGLSLGLVSYLVYLLFGGSE, VAEWGWQLGLPELLLIAATCL, SLSMTAINAYAMVIAGVLSLI, LFLQAIGALVIFSNLICYNLF, FLSFCNLVMPLFASFFGWLLL, and SFPPGLLFAVGFMVLGCRLIY. In terms of domain architecture, EamA 1 spans 34–157; sequence FIWSSSFALS…LGLVSYLVYL (124 aa). Residues 189–313 form the EamA 2 domain; the sequence is GWTLLRKLGR…GFMVLGCRLI (125 aa).

This sequence belongs to the drug/metabolite transporter (DMT) superfamily. 10 TMS drug/metabolite exporter (DME) (TC 2.A.7.3) family.

The protein resides in the cell membrane. With respect to regulation, CCCP treatment reduces SAM intracellular uptake by 50%. Transports S-adenosylmethionine (SAM) and S-adenosylhomocysteine (SAH). Allows bacteria to acquire SAM from the eukaryotic host cell and to likely remove the toxic by-product SAH. The sequence is that of S-adenosylmethionine/S-adenosylhomocysteine transporter from Chlamydia trachomatis serovar L2 (strain ATCC VR-902B / DSM 19102 / 434/Bu).